The primary structure comprises 77 residues: Translation initiation factor IF-1, chloroplastic (77 aa).

One can recognise an S1-like domain in the interval 1-71; sequence MKEQKLIHEG…TRGRIIYRLR (71 aa).

Belongs to the IF-1 family. As to quaternary structure, component of the 30S ribosomal translation pre-initiation complex which assembles on the 30S ribosome in the order IF-2 and IF-3, IF-1 and N-formylmethionyl-tRNA(fMet); mRNA recruitment can occur at any time during PIC assembly.

It is found in the plastid. Its subcellular location is the chloroplast. Functionally, one of the essential components for the initiation of protein synthesis. Stabilizes the binding of IF-2 and IF-3 on the 30S subunit to which N-formylmethionyl-tRNA(fMet) subsequently binds. Helps modulate mRNA selection, yielding the 30S pre-initiation complex (PIC). Upon addition of the 50S ribosomal subunit IF-1, IF-2 and IF-3 are released leaving the mature 70S translation initiation complex. The sequence is that of Translation initiation factor IF-1, chloroplastic from Asarum canadense (Wild ginger).